The sequence spans 365 residues: MAAAAAMTAAGCGGAGAARSLSRFRGCLAGALLGDCVGAVYEARDTVDLTSVLRQVQDLEPDPGSPGSARTEALCYTDDTAMARALVQSLLAKEAFDEVDMAHRFAQEYKKDPDRGYGAGVITVFRKHLSPRCRDVFEPARAQFNGKGSYGNGGAMRVAGISLAYSSVQDVQKFARLSAQLTHASSLGYNGAILQALAVHLALQGESSSEHFLEQLLGHMEELESDAQSVLDARELGMEERPYSSRLKKIGELLEQDSVTREEVVSELGNGIAAFESVPTAIYCFLRCMEPDPEIPSTFNSLQRTLVYSISLGGDTDTIATMAGAIAGAYYGMEQVPESWQQSCEGYEETDVLAQSLHRVFQKSL.

The Mg(2+) site is built by Glu42, Thr77, Asp78, and Asp79. Position 78 (Asp78) interacts with substrate. Residues Lys147–Gly153, His183, Leu236, and Ile272 each bind substrate. Mg(2+) is bound by residues Asp315, Asp317, and Thr318.

It belongs to the ADP-ribosylglycohydrolase family. In terms of assembly, monomer. It depends on Mg(2+) as a cofactor.

The protein localises to the nucleus. It is found in the cytoplasm. It localises to the chromosome. The protein resides in the mitochondrion matrix. It carries out the reaction [(1''-&gt;2')-ADP-alpha-D-ribose](n) + H2O = [(1''-&gt;2')-ADP-alpha-D-ribose](n-1) + ADP-D-ribose. It catalyses the reaction 1''-O-acetyl-ADP-alpha-D-ribose + H2O = ADP-D-ribose + acetate + H(+). The catalysed reaction is O-(ADP-D-ribosyl)-L-seryl-[protein] + H2O = ADP-D-ribose + L-seryl-[protein]. The enzyme catalyses alpha-NAD(+) + H2O = ADP-D-ribose + nicotinamide + H(+). The protein undergoes a dramatic conformational switch from closed to open states upon substrate-binding, which enables specific substrate recognition for the 1''-O-linkage. The glutamate flap (Glu-42) blocks substrate entrance to Mg(2+) in the unliganded closed state. In presence of substrate, Glu-42 is ejected from the active site: this closed-to-open transition significantly widens the substrate-binding channel and precisely positions the scissile 1''-O-linkage for cleavage while securing tightly 2'- and 3'-hydroxyls of ADP-ribose. In terms of biological role, ADP-ribosylhydrolase that preferentially hydrolyzes the scissile alpha-O-linkage attached to the anomeric C1'' position of ADP-ribose and acts on different substrates, such as proteins ADP-ribosylated on serine and threonine, free poly(ADP-ribose) and O-acetyl-ADP-D-ribose. Specifically acts as a serine mono-ADP-ribosylhydrolase by mediating the removal of mono-ADP-ribose attached to serine residues on proteins, thereby playing a key role in DNA damage response. Serine ADP-ribosylation of proteins constitutes the primary form of ADP-ribosylation of proteins in response to DNA damage. Does not hydrolyze ADP-ribosyl-arginine, -cysteine, -diphthamide, or -asparagine bonds. Also able to degrade protein free poly(ADP-ribose), which is synthesized in response to DNA damage: free poly(ADP-ribose) acts as a potent cell death signal and its degradation by ADPRHL2 protects cells from poly(ADP-ribose)-dependent cell death, a process named parthanatos. Also hydrolyzes free poly(ADP-ribose) in mitochondria. Specifically digests O-acetyl-ADP-D-ribose, a product of deacetylation reactions catalyzed by sirtuins. Specifically degrades 1''-O-acetyl-ADP-D-ribose isomer, rather than 2''-O-acetyl-ADP-D-ribose or 3''-O-acetyl-ADP-D-ribose isomers. The polypeptide is ADP-ribosylhydrolase ARH3 (ADPRS) (Bos taurus (Bovine)).